We begin with the raw amino-acid sequence, 433 residues long: Glutamate-1-semialdehyde 2,1-aminomutase (433 aa).

Lys271 is subject to N6-(pyridoxal phosphate)lysine.

The protein belongs to the class-III pyridoxal-phosphate-dependent aminotransferase family. HemL subfamily. As to quaternary structure, homodimer. It depends on pyridoxal 5'-phosphate as a cofactor.

The protein resides in the cytoplasm. The catalysed reaction is (S)-4-amino-5-oxopentanoate = 5-aminolevulinate. It participates in porphyrin-containing compound metabolism; protoporphyrin-IX biosynthesis; 5-aminolevulinate from L-glutamyl-tRNA(Glu): step 2/2. It functions in the pathway porphyrin-containing compound metabolism; chlorophyll biosynthesis. The protein is Glutamate-1-semialdehyde 2,1-aminomutase of Prochlorococcus marinus (strain SARG / CCMP1375 / SS120).